The chain runs to 692 residues: Transforming growth factor beta activator LRRC33 (692 aa).

The first 18 residues, 1 to 18, serve as a signal peptide directing secretion; it reads MELLPLWLCLGFHFLTVG. Residues 19-650 are Extracellular-facing; sequence WRNRSGTATA…CKWERLDLGL (632 aa). N21 carries N-linked (GlcNAc...) asparagine glycosylation. The LRRNT domain maps to 29–56; sequence ASQGVCKLVGGAADCRGQSLASVPSSLP. LRR repeat units follow at residues 58 to 79, 82 to 103, 106 to 127, 133 to 155, 158 to 179, 182 to 203, 206 to 227, 228 to 239, 251 to 272, and 273 to 294; these read HARM…SLQP, LLES…AFQE, HLRS…TAAA, GLRR…MLQN, SLRS…VFEG, RLRE…AFDG, ELRH…GLTR, LRVLNVSYNVLE, ELET…PQYS, and KLRT…YNTS. N74 carries an N-linked (GlcNAc...) asparagine glycan. N-linked (GlcNAc...) asparagine glycosylation occurs at N155. N232 is a glycosylation site (N-linked (GlcNAc...) asparagine). N-linked (GlcNAc...) asparagine glycans are attached at residues N292, N309, and N312. LRR repeat units follow at residues 329–350, 353–374, 377–398, 403–424, 427–447, 463–484, 486–507, 512–534, 537–558, 559–580, and 585–594; these read DLRF…FLRK, SLSH…EHEP, ALTE…PGLA, SLRL…LFAN, NITT…PAAS, SLRS…PFQG, SLTY…APLQ, MLQV…DFSG, NLRD…GGSL, ALET…AVSE, and GLRTIYLSQN. N-linked (GlcNAc...) asparagine glycosylation is found at N408 and N427. N-linked (GlcNAc...) asparagine glycosylation occurs at N500. Positions 595 to 643 constitute an LRRCT domain; the sequence is PYDCCGVDGWGALQHGQTVADWAMVTCNLSSKIIRVTELPGGVPRDCKW. N622 carries N-linked (GlcNAc...) asparagine glycosylation. The chain crosses the membrane as a helical span at residues 651–671; the sequence is LYLVLILPSCLTLLVACTVIV. Residues 672–692 lie on the Cytoplasmic side of the membrane; it reads LTFKKPLLQVIKSRCHWSSVY.

It belongs to the LRRC32/LRRC33 family. In terms of assembly, interacts with TGFB1; associates via disulfide bonds with the Latency-associated peptide chain (LAP) regulatory chain of TGFB1, leading to regulate activation of TGF-beta-1. Interacts (via LRR repeats) with TLR2, TLR3, TLR4, TLR9 and probably other Toll-like receptors. Interacts with CYBB/NOX2; the interaction is direct. In terms of tissue distribution, mainly expressed in cells of hematopoietic origin. Highly expressed in bone marrow, thymus, liver, lung, intestine and spleen. In the brain, highly expressed in microglia.

The protein resides in the cell membrane. Its subcellular location is the endoplasmic reticulum membrane. Functionally, key regulator of transforming growth factor beta-1 (TGFB1) specifically required for microglia function in the nervous system. Required for activation of latent TGF-beta-1 in macrophages and microglia: associates specifically via disulfide bonds with the Latency-associated peptide (LAP), which is the regulatory chain of TGFB1, and regulates integrin-dependent activation of TGF-beta-1. TGF-beta-1 activation mediated by LRRC33/NRROS is highly localized: there is little spreading of TGF-beta-1 activated from one microglial cell to neighboring microglia, suggesting the existence of localized and selective activation of TGF-beta-1 by LRRC33/NRROS. Indirectly plays a role in Toll-like receptor (TLR) signaling: ability to inhibit TLR-mediated NF-kappa-B activation and cytokine production is probably a consequence of its role in TGF-beta-1 signaling. This Homo sapiens (Human) protein is Transforming growth factor beta activator LRRC33.